We begin with the raw amino-acid sequence, 434 residues long: Homoserine dehydrogenase (434 aa).

The NADPH site is built by threonine 13 and valine 14. NAD(+)-binding residues include valine 14, alanine 33, and alanine 43. Residue valine 14 participates in NADP(+) binding. Arginine 45 serves as a coordination point for NADPH. NADP(+) contacts are provided by arginine 45, arginine 46, and lysine 103. Lysine 103 lines the NADPH pocket. Glutamate 127, valine 130, glycine 132, and isoleucine 134 together coordinate Na(+). Residues glycine 185 and glutamate 188 each coordinate NADP(+). The L-homoserine site is built by glutamate 188 and aspartate 199. Lysine 203 serves as the catalytic Proton donor. Residue glycine 300 participates in NADPH binding. Glycine 300 serves as a coordination point for NAD(+). Residue glycine 300 participates in NADP(+) binding. One can recognise an ACT domain in the interval tyrosine 353–arginine 429.

This sequence belongs to the homoserine dehydrogenase family. A metal cation is required as a cofactor.

The catalysed reaction is L-homoserine + NADP(+) = L-aspartate 4-semialdehyde + NADPH + H(+). It carries out the reaction L-homoserine + NAD(+) = L-aspartate 4-semialdehyde + NADH + H(+). Its pathway is amino-acid biosynthesis; L-methionine biosynthesis via de novo pathway; L-homoserine from L-aspartate: step 3/3. It functions in the pathway amino-acid biosynthesis; L-threonine biosynthesis; L-threonine from L-aspartate: step 3/5. Feedback inhibition by threonine. Functionally, catalyzes the conversion of L-aspartate-beta-semialdehyde (L-Asa) to L-homoserine (L-Hse), the third step in the biosynthesis of threonine and methionine from aspartate. The sequence is that of Homoserine dehydrogenase (hom) from Pseudomonas aeruginosa (strain ATCC 15692 / DSM 22644 / CIP 104116 / JCM 14847 / LMG 12228 / 1C / PRS 101 / PAO1).